A 117-amino-acid chain; its full sequence is Large ribosomal subunit protein uL18 (117 aa).

Belongs to the universal ribosomal protein uL18 family. As to quaternary structure, part of the 50S ribosomal subunit; part of the 5S rRNA/L5/L18/L25 subcomplex. Contacts the 5S and 23S rRNAs.

This is one of the proteins that bind and probably mediate the attachment of the 5S RNA into the large ribosomal subunit, where it forms part of the central protuberance. The protein is Large ribosomal subunit protein uL18 of Haemophilus ducreyi (strain 35000HP / ATCC 700724).